Reading from the N-terminus, the 1315-residue chain is Claspin (1315 aa).

2 disordered regions span residues 22-276 (EAAD…AARL) and 345-474 (PADA…EQKT). 6 positions are modified to phosphoserine: Ser-26, Ser-42, Ser-46, Ser-53, Ser-65, and Ser-67. Positions 65–74 (SDSEAEDRDD) are enriched in acidic residues. Residues 91 to 101 (NLHSGKSQSRS) show a composition bias toward polar residues. Positions 108 to 118 (DSDESDMEETP) are enriched in acidic residues. Phosphoserine occurs at positions 109, 112, and 119. The span at 119–128 (SQESPETQEA) shows a compositional bias: polar residues. 2 stretches are compositionally biased toward basic and acidic residues: residues 153–178 (LLRE…MEKI) and 186–197 (TRCEESDADRPL). Residues 159–187 (EGKAKSKRRLEKEERTMEKIRRLKKKETR) are a coiled coil. A compositionally biased stretch (acidic residues) spans 205-228 (EDSDLFETGLEEENDSALEDEESL). Ser-220 carries the post-translational modification Phosphoserine. The span at 235-245 (VKNKVKNRKKK) shows a compositional bias: basic residues. Ser-255 carries the post-translational modification Phosphoserine. 2 stretches are compositionally biased toward basic and acidic residues: residues 391-415 (ACGK…DDRP) and 455-470 (EELK…EGMP). Ser-522 is subject to Phosphoserine. A coiled-coil region spans residues 599 to 626 (EKLQMLKAKLQEAMKLRRLEERQKRQAL). Positions 625 to 691 (ALFKLDNEDG…SSDIGKSVAL (67 aa)) are disordered. A compositionally biased stretch (acidic residues) spans 632 to 657 (EDGFEEEEEEEEMTDESEEDGEEETT). The segment covering 669 to 679 (KDEKETDKENT) has biased composition (basic and acidic residues). A phosphoserine mark is found at Ser-698, Ser-701, Ser-709, Ser-722, and Ser-740. The interval 713–750 (MGYFPTEEKSETDEYLAKQSDKLDEDDSSSLLTKESSH) is disordered. Over residues 741–750 (SSLLTKESSH) the composition is skewed to low complexity. Ser-785, Ser-787, Ser-810, Ser-816, and Ser-823 each carry phosphoserine. N6-acetyllysine is present on Lys-868. CKB motif repeat units lie at residues 887–896 (ELLDLCTGQF) and 917–926 (ELLNLCSGKF). Thr-893 carries the phosphothreonine; by CHEK1 modification. 2 disordered regions span residues 924-1002 (GKFP…NDEE) and 1032-1052 (EDEA…DGEE). Phosphoserine is present on Ser-932. A CKB motif 3 repeat occupies 954-963 (EALALCSGSF). The acidic patch stretch occupies residues 966–1063 (DREEEGEEEE…DEYEEDVIDE (98 aa)). 3 stretches are compositionally biased toward acidic residues: residues 967-977 (REEEGEEEEFG), 990-1002 (SDED…NDEE), and 1043-1052 (GSEDEYDGEE). Residues Ser-990, Ser-996, and Ser-998 each carry the phosphoserine modification. A coiled-coil region spans residues 1001 to 1036 (EELALDLEDDEEELLKQSEKMKRQMRLKKYLEDEAE). Phosphoserine occurs at positions 1133 and 1265. A disordered region spans residues 1264–1315 (LSPTKAEAAKDSSKPQVRRRGLSSMMSPSPKRLKTNGSSPGPKRSIFRYLES).

Belongs to the claspin family. In terms of assembly, interacts (phosphorylation-dependent) with CHEK1; regulates CLSPN function in checkpoint for DNA damage and replication. Interacts with ATR and RAD9A and these interactions are slightly reduced during checkpoint activation. Interacts with BRCA1 and this interaction increases during checkpoint activation. Interacts with TIMELESS; the interaction is required for leading-strand replication. Associates with the MCM2-7 complex and other replisome factors. Interacts (via the acidic patch) with CDC7; the interaction is required for phosphorylation of MCM proteins and CLASPIN by CDC7. Interacts with PCNA. Interacts with FZR1. In terms of processing, phosphorylated. Undergoes ATR-dependent phosphorylation by CHEK1 during activation of DNA replication or damage checkpoints. Phosphorylation by CSNK1G1/CK1 promotes CHEK1 binding. Phosphorylated by CDC7 during DNA replication, phosphorylation inhibits interaction between the acidic patch and N-terminal segments leading to increased binding to DNA and PCNA. Post-translationally, ubiquitinated by the anaphase promoting complex/cyclosome (APC/C) during G1 phase, leading to its degradation by the proteasome. Ubiquitination is mediated via its interaction with FZR1/CDH1. Following DNA damage, it is deubiquitinated by USP28 in G2 phase, preventing its degradation. Proteolytically cleaved by caspase-7 (CASP7) in response to apoptosis, leading to its inactivation.

It is found in the nucleus. In terms of biological role, required for checkpoint mediated cell cycle arrest in response to inhibition of DNA replication or to DNA damage induced by both ionizing and UV irradiation. Adapter protein which binds to BRCA1 and the checkpoint kinase CHEK1 and facilitates the ATR-dependent phosphorylation of both proteins. Also required to maintain normal rates of replication fork progression during unperturbed DNA replication. Binds directly to DNA, with particular affinity for branched or forked molecules and interacts with multiple protein components of the replisome such as the MCM2-7 complex and TIMELESS. Important for initiation of DNA replication, recruits kinase CDC7 to phosphorylate MCM2-7 components. The sequence is that of Claspin (Clspn) from Mus musculus (Mouse).